The following is a 1997-amino-acid chain: Nucleoprotein TPR (1997 aa).

Coiled-coil stretches lie at residues 1 to 36 (QEQHSQLEAAKTQVEKDMGEKISNLERELENANDLL), 101 to 277 (EIVK…HQMT), 335 to 1103 (DSTE…IKTI), and 1129 to 1305 (AEAS…EPQE). Basic and acidic residues-rich tracts occupy residues 672–702 (SSEYQSQLEKKMMESEKEKQELRDEKHKTVE) and 1290–1305 (REQQERHHEQRDEPQE). Disordered stretches follow at residues 672–706 (SSEYQSQLEKKMMESEKEKQELRDEKHKTVEQMEQ), 1290–1352 (REQQ…AAVP), 1438–1529 (AFVQ…KTET), 1561–1752 (IQTS…RRQS), 1795–1832 (AIHSPQVAGVPRFRFGPPEDMPQASSSHSDLGQLASQG), and 1870–1997 (ENPA…RSNI). 3 stretches are compositionally biased toward polar residues: residues 1306-1321 (TTRIPQQRQITLQPTT), 1328-1347 (SANTSEPPTANIKPTPSKVT), and 1446-1487 (SHAT…SSSI). Residues 1511-1529 (DQQRTKKRKEEDIEEKTET) show a composition bias toward basic and acidic residues. A compositionally biased stretch (polar residues) spans 1561 to 1587 (IQTSQVIESQAPEQLQNVQSTQDSLQD). 2 stretches are compositionally biased toward acidic residues: residues 1601 to 1637 (SDEENEDEQEGYEEEEQEDEEEDEDDAGIGEGDDSNE) and 1644 to 1667 (GNEDYEGDDAEEADGTDPDTETED). Composition is skewed to polar residues over residues 1692-1709 (AESTFSQETREQPSSASD), 1817-1830 (QASSSHSDLGQLAS), and 1879-1899 (HASQSVPMVTTSTGNVPTSVD). Residues 1902–1915 (AADEGDEVFVEAES) are compositionally biased toward acidic residues. The span at 1950 to 1959 (SSSIADTSSS) shows a compositional bias: low complexity.

The protein belongs to the TPR family. Homodimer. Part of the nuclear pore complex (NPC). Interacts with nuclear receptor KPNB1; the interaction occurs in a RanGTP-dependent manner. Associates with the Importin alpha/Importin beta receptor. In terms of tissue distribution, expressed in epithelial cells, oocytes and egg (at protein level).

The protein resides in the nucleus. It is found in the nucleus membrane. It localises to the nucleus envelope. The protein localises to the nuclear pore complex. Its subcellular location is the cytoplasm. The protein resides in the cytoskeleton. It is found in the spindle. It localises to the chromosome. The protein localises to the centromere. Its subcellular location is the kinetochore. Component of the nuclear pore complex (NPC), a complex required for the trafficking across the nuclear envelope. Functions as a scaffolding element in the nuclear phase of the NPC essential for normal nucleocytoplasmic transport of proteins and mRNAs, plays a role in the establishment of nuclear-peripheral chromatin compartmentalization in interphase, and in the mitotic spindle checkpoint signaling during mitosis. Involved in the quality control and retention of unspliced mRNAs in the nucleus. Implicated in nuclear export of mRNAs transcribed from heat shock gene promoters. May play a limited role in the regulation of nuclear protein export. May be involved in the formation and/or maintenance of NPC-associated perinuclear heterochromatin exclusion zones (HEZs). Finally, may act as a spatial regulator of the spindle-assembly checkpoint (SAC) response. This is Nucleoprotein TPR from Xenopus laevis (African clawed frog).